Reading from the N-terminus, the 1305-residue chain is DNA-directed DNA polymerase (1305 aa).

The protein belongs to the DNA polymerase type-C family.

The catalysed reaction is DNA(n) + a 2'-deoxyribonucleoside 5'-triphosphate = DNA(n+1) + diphosphate. In terms of biological role, replicates viral genomic DNA. The protein is DNA-directed DNA polymerase of Bacillus pumilus (Bacillus mesentericus).